A 742-amino-acid polypeptide reads, in one-letter code: Hapless 2 (742 aa).

Residues 1–19 form the signal peptide; it reads MKFLAFGLIYFHFCILNRC. Topologically, residues 20–540 are extracellular; the sequence is EYITSSTIQK…CYFSAGCIKE (521 aa). 7 disulfides stabilise this stretch: C30-C40, C118-C147, C129-C182, C148-C312, C150-C168, C295-C319, and C431-C470. The tract at residues 152 to 179 is important for membrane fusion; the sequence is LSDILGMGNDLSRGKVCYALNLGAGSAT. A helical transmembrane segment spans residues 541 to 561; that stretch reads AFKSIASIAGVASALALVIFL. Residues 562-742 lie on the Cytoplasmic side of the membrane; that stretch reads AKNGYLVPII…STSPLYLLIE (181 aa).

This sequence belongs to the HAP2/GCS1 family.

It localises to the cell membrane. The protein resides in the cell junction. Functionally, during fertilization, required for the formation of intercellular membrane pores and subsequent exchange of gametic pronuclei between cells. Probably initiates the formation of intercellular membrane pores by inserting part of its extracellular domain into the cell membrane of the adjoining cell in the mating pair. Mating requires the presence of HAP2 on at least one of the two cells. Mating efficiency is high when HAP2 is present on both cells, and is strongly reduced when HAP2 is present on only one of the two cells. The chain is Hapless 2 from Tetrahymena thermophila.